The chain runs to 249 residues: 5'-nucleotidase SurE (249 aa).

The a divalent metal cation site is built by Asp-8, Asp-9, Ser-39, and Asn-91.

This sequence belongs to the SurE nucleotidase family. Requires a divalent metal cation as cofactor.

The protein localises to the cytoplasm. The enzyme catalyses a ribonucleoside 5'-phosphate + H2O = a ribonucleoside + phosphate. Functionally, nucleotidase that shows phosphatase activity on nucleoside 5'-monophosphates. The sequence is that of 5'-nucleotidase SurE from Pseudomonas entomophila (strain L48).